A 127-amino-acid chain; its full sequence is UPF0325 protein VS_2356 (127 aa).

It belongs to the UPF0325 family.

This is UPF0325 protein VS_2356 from Vibrio atlanticus (strain LGP32) (Vibrio splendidus (strain Mel32)).